The chain runs to 424 residues: Histidine--tRNA ligase (424 aa).

The protein belongs to the class-II aminoacyl-tRNA synthetase family. Homodimer.

The protein resides in the cytoplasm. It catalyses the reaction tRNA(His) + L-histidine + ATP = L-histidyl-tRNA(His) + AMP + diphosphate + H(+). This Edwardsiella ictaluri (strain 93-146) protein is Histidine--tRNA ligase.